The chain runs to 424 residues: STAM-binding protein (424 aa).

The tract at residues 1–127 (MSDHGDVSLP…YEQYKERKKK (127 aa)) is interaction with CHMP3. Residues serine 2 and serine 48 each carry the phosphoserine modification. Residues 227-231 (PAKPP) are interaction with STAM. Serine 243 carries the phosphoserine modification. Residues 257–388 (IVVPRNLCSE…LTDYGLQEIS (132 aa)) form the MPN domain. Zn(2+)-binding residues include histidine 335, histidine 337, aspartate 348, histidine 350, cysteine 390, histidine 396, and histidine 398. Residues 335-348 (HTHPTQTAFLSSVD) carry the JAMM motif motif.

The protein belongs to the peptidase M67C family. As to quaternary structure, interacts with STAM. Interacts with SMAD6 and SMAD7. Interacts with CHMP3; the interaction appears to relieve the autoinhibition of CHMP3. Interacts with SMURF2 and RNF11; this interaction promotes ubiquitination. The cofactor is Zn(2+). Phosphorylated after BMP type I receptor activation. In terms of processing, ubiquitinated by SMURF2 in the presence of RNF11. Expressed in brain.

The protein resides in the nucleus. It localises to the membrane. The protein localises to the cytoplasm. It is found in the early endosome. Its activity is regulated as follows. Inhibited by N-ethylmaleimide. Zinc metalloprotease that specifically cleaves 'Lys-63'-linked polyubiquitin chains. Does not cleave 'Lys-48'-linked polyubiquitin chains. Plays a role in signal transduction for cell growth and MYC induction mediated by IL-2 and GM-CSF. Potentiates BMP (bone morphogenetic protein) signaling by antagonizing the inhibitory action of SMAD6 and SMAD7. Has a key role in regulation of cell surface receptor-mediated endocytosis and ubiquitin-dependent sorting of receptors to lysosomes. Endosomal localization of STAMBP is required for efficient EGFR degradation but not for its internalization. Involved in the negative regulation of PI3K-AKT-mTOR and RAS-MAP signaling pathways. In Mus musculus (Mouse), this protein is STAM-binding protein (Stambp).